A 420-amino-acid chain; its full sequence is Meiotically up-regulated gene 137 protein (420 aa).

One can recognise a BAR domain in the interval 10-232 (NEKPLGDQRA…QNSLTPQKKI (223 aa)). Residues 279–345 (KETVFVKAIY…PVNYCTRIYD (67 aa)) form the SH3 domain. The interval 398-420 (SQNVEASSQPIKIRKPLPEIPNK) is disordered.

Its subcellular location is the cytoplasm. The protein localises to the nucleus. Functionally, has a role in meiosis and sporulation. The chain is Meiotically up-regulated gene 137 protein (mug137) from Schizosaccharomyces pombe (strain 972 / ATCC 24843) (Fission yeast).